The primary structure comprises 151 residues: uncharacterized protein (151 aa).

The [4Fe-4S] cluster site is built by Cys24, Cys27, Cys92, and Cys129.

The protein belongs to the complex I 20 kDa subunit family. It depends on [4Fe-4S] cluster as a cofactor.

This is an uncharacterized protein from Methanocaldococcus jannaschii (strain ATCC 43067 / DSM 2661 / JAL-1 / JCM 10045 / NBRC 100440) (Methanococcus jannaschii).